A 255-amino-acid polypeptide reads, in one-letter code: Glucanase inhibitor protein 4 (255 aa).

An N-terminal signal peptide occupies residues 1–21 (MKSITTASFALILFGVGAASA). The Peptidase S1 domain occupies 29–255 (VLGGGAVPSG…ESLGMDQLGH (227 aa)). A disulfide bridge connects residues C56 and C72. 4 N-linked (GlcNAc...) asparagine glycosylation sites follow: N90, N105, N110, and N160. 2 disulfides stabilise this stretch: C180-C192 and C202-C235.

This sequence belongs to the peptidase S1 family. In terms of assembly, forms an apoplastic complex with host endoglucanases in tomato leaves during P.infestans infection.

The protein resides in the secreted. Functionally, secreted effector that suppresses host plant glucan elicitor-mediated defense responses. Targets host endoglucanases and inhibits the endoglucanase-mediated release of elicitor-active glucan oligosaccharides from P.infestans cell walls. The polypeptide is Glucanase inhibitor protein 4 (Phytophthora infestans (Potato late blight agent)).